The chain runs to 430 residues: Adenylosuccinate synthetase (430 aa).

GTP contacts are provided by residues 12–18 and 40–42; these read GDEGKGK and GHT. Asp-13 acts as the Proton acceptor in catalysis. Positions 13 and 40 each coordinate Mg(2+). Residues 13–16, 38–41, Thr-130, Arg-144, Gln-224, Thr-239, and Arg-303 contribute to the IMP site; these read DEGK and NAGH. His-41 serves as the catalytic Proton donor. A substrate-binding site is contributed by 299–305; that stretch reads VNTGRKR. Residues Arg-305, 331–333, and 413–415 each bind GTP; these read KLD and STS.

The protein belongs to the adenylosuccinate synthetase family. As to quaternary structure, homodimer. Mg(2+) is required as a cofactor.

It is found in the cytoplasm. The catalysed reaction is IMP + L-aspartate + GTP = N(6)-(1,2-dicarboxyethyl)-AMP + GDP + phosphate + 2 H(+). The protein operates within purine metabolism; AMP biosynthesis via de novo pathway; AMP from IMP: step 1/2. In terms of biological role, plays an important role in the de novo pathway of purine nucleotide biosynthesis. Catalyzes the first committed step in the biosynthesis of AMP from IMP. This is Adenylosuccinate synthetase from Nitrobacter hamburgensis (strain DSM 10229 / NCIMB 13809 / X14).